The primary structure comprises 586 residues: uncharacterized protein (586 aa).

Disordered stretches follow at residues 17-64 and 80-123; these read VRRT…ETEE and HSCS…GGAN. Residues 28-37 are compositionally biased toward polar residues; that stretch reads PSTSGSIAWT. 2 stretches are compositionally biased toward low complexity: residues 38–52 and 80–91; these read SSES…VSSS and HSCSAATTSQQS. Positions 94–110 are enriched in basic and acidic residues; sequence QSKEHRIGGIKKEEKPI. Positions 112–123 are enriched in gly residues; the sequence is MGGGSSENGGAN. 12 consecutive transmembrane segments (helical) span residues 151-171, 191-211, 218-238, 243-263, 283-303, 317-337, 375-395, 413-433, 441-461, 466-486, 513-533, and 536-556; these read WVIL…WIQY, WTSM…AWLL, LSVL…LLST, FWVT…TLGI, LGVF…PLIV, TLFL…ICFF, FVIL…ISTL, YVGL…GFIL, LTTI…TLTI, MVLV…YLPI, IFGI…GTFT, and IIMS…REDL.

Belongs to the major facilitator superfamily. Feline leukemia virus subgroup C receptor (TC 2.A.1.28.1) family.

Its subcellular location is the membrane. This is an uncharacterized protein from Caenorhabditis elegans.